Consider the following 214-residue polypeptide: Adenylate kinase (214 aa).

12-17 (GVGKGT) contributes to the ATP binding site. Residues 32–61 (STGNIFRSQIASNSELGIKLKEIVESGGYV) are NMP. Residues threonine 33, arginine 38, 59 to 61 (GYV), 88 to 91 (GYPR), and glutamine 95 contribute to the AMP site. The LID stretch occupies residues 126–163 (GRRICPSCNAQYHIYFKKSKLDTKCEIDQSELIQRKDD). Arginine 127 lines the ATP pocket. Residues cysteine 130, cysteine 133, cysteine 150, and aspartate 153 each coordinate Zn(2+). The AMP site is built by arginine 160 and arginine 171. ATP is bound at residue lysine 199.

It belongs to the adenylate kinase family. As to quaternary structure, monomer.

The protein localises to the cytoplasm. It catalyses the reaction AMP + ATP = 2 ADP. The protein operates within purine metabolism; AMP biosynthesis via salvage pathway; AMP from ADP: step 1/1. Functionally, catalyzes the reversible transfer of the terminal phosphate group between ATP and AMP. Plays an important role in cellular energy homeostasis and in adenine nucleotide metabolism. The protein is Adenylate kinase of Mycoplasmopsis pulmonis (strain UAB CTIP) (Mycoplasma pulmonis).